Consider the following 219-residue polypeptide: Peptide methionine sulfoxide reductase MsrA (219 aa).

Residues 1 to 20 (MGLFRSPRQNLPTAADALPG) form a disordered region. Residue cysteine 55 is part of the active site.

This sequence belongs to the MsrA Met sulfoxide reductase family.

It carries out the reaction L-methionyl-[protein] + [thioredoxin]-disulfide + H2O = L-methionyl-(S)-S-oxide-[protein] + [thioredoxin]-dithiol. It catalyses the reaction [thioredoxin]-disulfide + L-methionine + H2O = L-methionine (S)-S-oxide + [thioredoxin]-dithiol. In terms of biological role, has an important function as a repair enzyme for proteins that have been inactivated by oxidation. Catalyzes the reversible oxidation-reduction of methionine sulfoxide in proteins to methionine. The protein is Peptide methionine sulfoxide reductase MsrA of Rhodospirillum centenum (strain ATCC 51521 / SW).